The sequence spans 96 residues: Small ribosomal subunit protein bS6 (96 aa).

The protein belongs to the bacterial ribosomal protein bS6 family.

Binds together with bS18 to 16S ribosomal RNA. This chain is Small ribosomal subunit protein bS6, found in Streptococcus gordonii (strain Challis / ATCC 35105 / BCRC 15272 / CH1 / DL1 / V288).